A 600-amino-acid chain; its full sequence is MQDNLIYLANCFLNEAIKTTLQNLNKVNIIDTPELYSFVKGINTDYQFNKSTKLANDCNLDKEKIVNELITQLKSNSFFENISSVELEQNKSVKINGKKTNTVIKQIMITLNISKLYLSNRINLLYKRILSGSSIYVPNTITKKIIVDYSSPNIAKEMHIGHLRSTIIGESICRVLEMCGHDVYRINHVGDWGTQFGMLIAYIKNNQIESYTISELMNIYKESRKLFESSIDFKNQSRLETVSLQNGNIESITIWQKIHKISMNSFHEIYSLLGINNLITKGESFYQDQMTELVNSLTSDNKITVENDMKLMFVEGISKPFILQKSDGGFTYDTSDLTALKYRLFIEKADHIIYVVDSSQQEHFSQMFQIAEKLDWIKNQQLQHIGFGLVLGSDGSKLKTRSGETIKLQDVIDNVVSHASNITRELIKQKNLDWNDDDILTISKKIAINCIKYSDLNNPRLNNYKFDINKMLNSKGNTAVYLMYGLARCKSILRKVPNNTVLNGDIIIENENSRNLLLHVLKYVEVIDQTVETMCPHYLCIYLYDLIGSLTKFYTTNRCLEYDNDNLIGYNANNLRIVNMVKIIISKIFELIGLEEIEQL.

Residues 151-153, histidine 162, tyrosine 332, aspartate 336, and glutamine 360 contribute to the L-arginine site; that span reads SPN. The 'HIGH' region signature appears at 152-162; sequence PNIAKEMHIGH.

This sequence belongs to the class-I aminoacyl-tRNA synthetase family.

The catalysed reaction is tRNA(Arg) + L-arginine + ATP = L-arginyl-tRNA(Arg) + AMP + diphosphate. In Acanthamoeba polyphaga mimivirus (APMV), this protein is Arginine--tRNA ligase (RARS).